A 297-amino-acid chain; its full sequence is Ketohexokinase (297 aa).

Beta-D-fructose contacts are provided by Asp-15, Gly-41, Asn-42, and Asn-45. ATP contacts are provided by residues Arg-107, Ala-225 to Gly-228, and Gly-254 to Asp-257. A beta-D-fructose-binding site is contributed by Asp-257.

It belongs to the carbohydrate kinase PfkB family. As to quaternary structure, homodimer.

It carries out the reaction beta-D-fructose + ATP = beta-D-fructose 1-phosphate + ADP + H(+). Its pathway is carbohydrate metabolism; fructose metabolism. Requires potassium. Inhibition by ADP. In terms of biological role, catalyzes the phosphorylation of the ketose sugar fructose to fructose-1-phosphate. In Pongo abelii (Sumatran orangutan), this protein is Ketohexokinase (KHK).